The chain runs to 231 residues: uncharacterized protein (231 aa).

A Response regulatory domain is found at 4–116; it reads RILVVEDDED…ELHARVIAQL (113 aa). D52 is subject to 4-aspartylphosphate. A DNA-binding region (ompR/PhoB-type) is located at residues 129-230; sequence EETFLIGGKL…EWGRGYRFGA (102 aa).

Phosphorylated by YrkQ.

It localises to the cytoplasm. Functionally, member of the two-component regulatory system YrkQ/YrkP. This is an uncharacterized protein from Bacillus subtilis (strain 168).